The chain runs to 193 residues: Transcriptional repressor NrdR (193 aa).

A zinc finger spans residues 3-34 (CPYCGGLDTQVKDSRPSEDASAIRRRRICPDC). The ATP-cone domain occupies 49–139 (LTVVKRSGRK…VYKNFREAKD (91 aa)). The segment at 150-193 (DQQDGAVPQAEADRPIGAGPPSEAAQPAAGEGGDAPMRRARSRA) is disordered.

Belongs to the NrdR family. Requires Zn(2+) as cofactor.

Negatively regulates transcription of bacterial ribonucleotide reductase nrd genes and operons by binding to NrdR-boxes. The sequence is that of Transcriptional repressor NrdR from Methylobacterium nodulans (strain LMG 21967 / CNCM I-2342 / ORS 2060).